The sequence spans 1795 residues: Putative surface cell antigen sca2 (1795 aa).

The N-terminal stretch at 1 to 33 (MNLQNSHSKKYVLTFFMSTCLLTSSFLSTSARA) is a signal peptide. Polar residues predominate over residues 360-373 (FLNNNDTTKPSTGR). Disordered stretches follow at residues 360-391 (FLNN…SNQS), 664-709 (LEQT…SSNS), and 1354-1441 (KQEN…DEEL). The span at 672–700 (PNPPPLPLNGGIPNPPPLPLNGSMPPPPL) shows a compositional bias: pro residues. 2 stretches are compositionally biased toward basic and acidic residues: residues 1364 to 1383 (SSTK…EQSD) and 1398 to 1409 (SKNDKSSDDKKS). Residues 1417–1432 (DEDDTGYATDEEELEE) are compositionally biased toward acidic residues. The region spanning 1516 to 1795 (ETSINRGVWI…QGLIKLKVNL (280 aa)) is the Autotransporter domain.

It is found in the cell outer membrane. The protein is Putative surface cell antigen sca2 (sca2) of Rickettsia conorii (strain ATCC VR-613 / Malish 7).